The following is a 257-amino-acid chain: Indole-3-glycerol phosphate synthase (257 aa).

It belongs to the TrpC family.

It carries out the reaction 1-(2-carboxyphenylamino)-1-deoxy-D-ribulose 5-phosphate + H(+) = (1S,2R)-1-C-(indol-3-yl)glycerol 3-phosphate + CO2 + H2O. It functions in the pathway amino-acid biosynthesis; L-tryptophan biosynthesis; L-tryptophan from chorismate: step 4/5. This is Indole-3-glycerol phosphate synthase from Phenylobacterium zucineum (strain HLK1).